A 107-amino-acid polypeptide reads, in one-letter code: MTDNPWLIMMINMTIVFGVLIVLGILMVLIHAVDPTKKVQGKKKPVVAKPAPSAAASKRQEEEKVAAMAAVLALVQDEDDMIAAALSAAIAEHKRKMEPMNLPHHSF.

Residues 10 to 32 form a helical membrane-spanning segment; it reads MINMTIVFGVLIVLGILMVLIHA. The segment at 37 to 60 is disordered; that stretch reads KKVQGKKKPVVAKPAPSAAASKRQ. A compositionally biased stretch (low complexity) spans 47-57; it reads VAKPAPSAAAS.

It belongs to the OadG family. Heterooctamer consisting of two alpha, two beta, two gamma and two delta subunits.

Its subcellular location is the cell membrane. The enzyme catalyses (2E)-glutaconyl-CoA + Na(+)(in) + H(+) = (2E)-butenoyl-CoA + Na(+)(out) + CO2. It functions in the pathway amino-acid degradation; L-glutamate degradation via hydroxyglutarate pathway; crotonoyl-CoA from L-glutamate: step 5/5. Part of the primary sodium pump glutaconyl-CoA decarboxylase (GCD). Possible membrane anchor for the alpha subunit. The polypeptide is Glutaconyl-CoA decarboxylase subunit delta (gcdD) (Acidaminococcus fermentans (strain ATCC 25085 / DSM 20731 / CCUG 9996 / CIP 106432 / VR4)).